Reading from the N-terminus, the 257-residue chain is tRNA (guanine-N(1)-)-methyltransferase (257 aa).

Residues G117 and 137-142 contribute to the S-adenosyl-L-methionine site; that span reads LGDFVL.

Belongs to the RNA methyltransferase TrmD family. Homodimer.

The protein localises to the cytoplasm. It catalyses the reaction guanosine(37) in tRNA + S-adenosyl-L-methionine = N(1)-methylguanosine(37) in tRNA + S-adenosyl-L-homocysteine + H(+). In terms of biological role, specifically methylates guanosine-37 in various tRNAs. In Bordetella pertussis (strain Tohama I / ATCC BAA-589 / NCTC 13251), this protein is tRNA (guanine-N(1)-)-methyltransferase.